The following is a 440-amino-acid chain: Rhamnogalacturonase A (440 aa).

A signal peptide spans methionine 1–glycine 18. Cysteine 39 and cysteine 65 are oxidised to a cystine. N-linked (GlcNAc...) asparagine glycosylation occurs at asparagine 50. The active-site Proton donor is the aspartate 215. An intrachain disulfide couples cysteine 217 to cysteine 234. Residue histidine 290 is part of the active site. An N-linked (GlcNAc...) asparagine glycan is attached at asparagine 317. Intrachain disulfides connect cysteine 340/cysteine 346 and cysteine 368/cysteine 377. Residue threonine 385 is glycosylated (O-linked (Man) threonine). O-linked (Man) serine glycosylation is present at serine 386. Residues threonine 388, threonine 389, and threonine 390 are each glycosylated (O-linked (Man) threonine). O-linked (Man) serine glycosylation occurs at serine 391. O-linked (Man) threonine glycans are attached at residues threonine 392 and threonine 394. O-linked (Man) serine glycosylation is found at serine 398 and serine 401. 3 O-linked (Man) threonine glycosylation sites follow: threonine 403, threonine 404, and threonine 416. An O-linked (Man) serine glycan is attached at serine 418. 2 O-linked (Man) threonine glycosylation sites follow: threonine 423 and threonine 426. O-linked (Man) serine glycosylation is found at serine 427 and serine 436.

It belongs to the glycosyl hydrolase 28 family. In terms of processing, the N-terminus is blocked. N-glycosylated and may also be O-glycosylated.

The protein resides in the secreted. The enzyme catalyses Endohydrolysis of alpha-D-GalA-(1-&gt;2)-alpha-L-Rha glycosidic bond in the rhamnogalacturonan I backbone with initial inversion of anomeric configuration releasing oligosaccharides with beta-D-GalA at the reducing end.. In terms of biological role, pectinolytic enzymes consist of four classes of enzymes: pectine lyase, polygalacturonase, pectin methylesterase and rhamnogalacturonase. Has a positive effect in the apple hot-mash liquefaction process. Hydrolyzes alpha-D-galacturonopyranosyl-(1,2)-alpha-L-rhamnopyranosyl linkages in the backbone of the hairy regions of pectins. This Aspergillus aculeatus protein is Rhamnogalacturonase A (rhgA).